The primary structure comprises 510 residues: Pectinesterase 2 (510 aa).

A signal peptide spans 1 to 19; the sequence is MALRILITVSLVLFSLSHT. 2 N-linked (GlcNAc...) asparagine glycosylation sites follow: Asn110 and Asn158. Substrate is bound by residues Thr275 and Gln305. The active-site Proton donor is Asp328. Cys342 and Cys362 are oxidised to a cystine. The active-site Nucleophile is Asp349. 2 N-linked (GlcNAc...) asparagine glycosylation sites follow: Asn371 and Asn385. Residues Arg416 and Trp418 each contribute to the substrate site.

In the N-terminal section; belongs to the PMEI family. This sequence in the C-terminal section; belongs to the pectinesterase family. As to expression, expressed at low levels in young leaves, young bark, young fruit, mature fruit vesicles, shoots and flower buds, young bark and juice vesicles. In both leaf and fruit abscission zones, and mature leaves, expression was initially undetectable but increased markedly following ethylene treatment.

It is found in the secreted. It localises to the cell wall. The enzyme catalyses [(1-&gt;4)-alpha-D-galacturonosyl methyl ester](n) + n H2O = [(1-&gt;4)-alpha-D-galacturonosyl](n) + n methanol + n H(+). The protein operates within glycan metabolism; pectin degradation; 2-dehydro-3-deoxy-D-gluconate from pectin: step 1/5. In terms of biological role, acts in the modification of cell walls via demethylesterification of cell wall pectin. This chain is Pectinesterase 2 (PECS-2.1), found in Citrus sinensis (Sweet orange).